We begin with the raw amino-acid sequence, 260 residues long: Imidazole glycerol phosphate synthase subunit HisF (260 aa).

Active-site residues include aspartate 11 and aspartate 130.

Belongs to the HisA/HisF family. In terms of assembly, heterodimer of HisH and HisF.

The protein resides in the cytoplasm. The enzyme catalyses 5-[(5-phospho-1-deoxy-D-ribulos-1-ylimino)methylamino]-1-(5-phospho-beta-D-ribosyl)imidazole-4-carboxamide + L-glutamine = D-erythro-1-(imidazol-4-yl)glycerol 3-phosphate + 5-amino-1-(5-phospho-beta-D-ribosyl)imidazole-4-carboxamide + L-glutamate + H(+). The protein operates within amino-acid biosynthesis; L-histidine biosynthesis; L-histidine from 5-phospho-alpha-D-ribose 1-diphosphate: step 5/9. Functionally, IGPS catalyzes the conversion of PRFAR and glutamine to IGP, AICAR and glutamate. The HisF subunit catalyzes the cyclization activity that produces IGP and AICAR from PRFAR using the ammonia provided by the HisH subunit. The chain is Imidazole glycerol phosphate synthase subunit HisF from Desulfatibacillum aliphaticivorans.